The chain runs to 69 residues: Lantibiotic lichenicidin A2 (69 aa).

Positions 1–37 (MKNSAAREAFKGANHPAGMVSEEELKALVGGNDVNPE) are excised as a propeptide. Residue Thr38 is modified to 2-oxobutanoic acid. 3 positions are modified to (Z)-2,3-didehydrobutyrine: Thr39, Thr42, and Thr43. The lanthionine (Ser-Cys) cross-link spans 44 to 48 (SSWTC). At Ser45 the chain carries 2,3-didehydroalanine (Ser). Residues Thr50 and Thr54 each carry the (Z)-2,3-didehydrobutyrine modification. Positions 56 to 60 (SASLC) form a cross-link, lanthionine (Ser-Cys). 2 consecutive cross-links (beta-methyllanthionine (Thr-Cys)) follow at residues 62–65 (TTKC) and 66–69 (TSRC). Thr63 bears the (Z)-2,3-didehydrobutyrine mark.

Maturation of lantibiotics involves the enzymatic conversion of Thr, and Ser into dehydrated AA and the formation of thioether bonds with cysteine. This is followed by membrane translocation and cleavage of the modified precursor.

The protein localises to the secreted. The protein resides in the cell wall. Lanthionine-containing peptide antibiotic (lantibiotic) active on Gram-positive bacteria. The bactericidal activity of lantibiotics is based on depolarization of energized bacterial cytoplasmic membranes, initiated by the formation of aqueous transmembrane pores. When present individually, LchA2 exhibits activity towards L.lactis HP. When combined with LchA1, it displays activity towards a broad spectrum of non-pathogenic and pathogenic Gram-positive bacteria including strains of L.monocytogenes, methicillin-resistant S.aureus, S.pneumoniae and strains of vancomycin-resistant enterococci, but not towards E.faecium L4001 and BM4147-1. Combined LchA1 and LchA2 peptides also inhibit Bacillus sp. HIL-Y85/54728, L.lactis DPC3417 and B.halodurans C-125, which produce lantibiotics themselves. Inactivated by proteinase K and pronase E, but not by trypsin and chymotrypsin. In Bacillus licheniformis (strain ATCC 14580 / DSM 13 / JCM 2505 / CCUG 7422 / NBRC 12200 / NCIMB 9375 / NCTC 10341 / NRRL NRS-1264 / Gibson 46), this protein is Lantibiotic lichenicidin A2.